The following is a 707-amino-acid chain: Alpha-hemolysin translocation ATP-binding protein HlyB (707 aa).

The 123-residue stretch at 3–125 (SCHKIDYGLY…ALYQGHIILI (123 aa)) folds into the Peptidase C39 domain. The active site involves H83. The ABC transmembrane type-1 domain maps to 154–436 (FIETLVVSVF…LAQIWQDFQQ (283 aa)). The next 5 helical transmembrane spans lie at 158-178 (LVVS…FQVV), 191-211 (LNVI…LSGL), 269-289 (ALTS…MWYY), 295-315 (LVIL…SPIL), and 388-408 (VMII…LSIG). Residues 468 to 703 (ITFRNIRFRY…PESLYSYLYQ (236 aa)) form the ABC transporter domain. 502-509 (GRSGSGKS) contacts ATP.

It belongs to the ABC transporter superfamily. Protein-1 exporter (TC 3.A.1.109) family. Homodimer.

Its subcellular location is the cell inner membrane. In terms of biological role, part of the ABC transporter complex HlyBD involved in hemolysin export. Transmembrane domains (TMD) form a pore in the inner membrane and the ATP-binding domain (NBD) is responsible for energy generation. The polypeptide is Alpha-hemolysin translocation ATP-binding protein HlyB (hlyB) (Escherichia coli).